Here is a 221-residue protein sequence, read N- to C-terminus: Putative hemin import ATP-binding protein HrtA (221 aa).

The ABC transporter domain maps to 3-221; sequence LQLKHITKTF…IEIQDGKIEL (219 aa). 39–46 lines the ATP pocket; the sequence is GASGSGKS.

This sequence belongs to the ABC transporter superfamily. HrtA family. In terms of assembly, the complex is composed of two ATP-binding proteins (HrtA), two transmembrane proteins (HrtB) and a solute-binding protein.

Its subcellular location is the cell membrane. Its function is as follows. Part of the ABC transporter complex hrt involved in hemin import. Responsible for energy coupling to the transport system. The polypeptide is Putative hemin import ATP-binding protein HrtA (hrtA) (Staphylococcus haemolyticus (strain JCSC1435)).